Consider the following 264-residue polypeptide: tRNA (guanine-N(1)-)-methyltransferase (264 aa).

S-adenosyl-L-methionine is bound by residues G133 and 152–157 (LGDFVM). Basic and acidic residues predominate over residues 240 to 251 (QRRPDLWRKARG). The interval 240–264 (QRRPDLWRKARGGEPPADESGEVRR) is disordered. Acidic residues predominate over residues 255–264 (PADESGEVRR).

Belongs to the RNA methyltransferase TrmD family. Homodimer.

It is found in the cytoplasm. The catalysed reaction is guanosine(37) in tRNA + S-adenosyl-L-methionine = N(1)-methylguanosine(37) in tRNA + S-adenosyl-L-homocysteine + H(+). In terms of biological role, specifically methylates guanosine-37 in various tRNAs. The sequence is that of tRNA (guanine-N(1)-)-methyltransferase from Sorangium cellulosum (strain So ce56) (Polyangium cellulosum (strain So ce56)).